The sequence spans 222 residues: Large ribosomal subunit protein uL4 (222 aa).

This sequence belongs to the universal ribosomal protein uL4 family. In terms of assembly, part of the 50S ribosomal subunit.

Functionally, one of the primary rRNA binding proteins, this protein initially binds near the 5'-end of the 23S rRNA. It is important during the early stages of 50S assembly. It makes multiple contacts with different domains of the 23S rRNA in the assembled 50S subunit and ribosome. Its function is as follows. Forms part of the polypeptide exit tunnel. This Methylacidiphilum infernorum (isolate V4) (Methylokorus infernorum (strain V4)) protein is Large ribosomal subunit protein uL4.